The primary structure comprises 2656 residues: 1-phosphatidylinositol 3-phosphate 5-kinase (2656 aa).

Residues 24 to 159 (FGTDDSQKDF…NSTNNDTSSN (136 aa)) are disordered. 2 stretches are compositionally biased toward low complexity: residues 59-107 (NNNN…NNNN) and 124-159 (SNTT…TSSN). An FYVE-type zinc finger spans residues 198 to 255 (DHSSAVCYECSEEFTTFKRRHHCRLCGQIFCWKCSQKTLTDGKGERVRVCNFCYRRYM). The Zn(2+) site is built by Cys-204, Cys-207, Cys-220, Cys-223, Cys-228, Cys-231, Cys-247, and Cys-250. Over residues 304–331 (NVSLGNSGDNSSFVQSPNNNFSQSPTFS) the composition is skewed to polar residues. Disordered stretches follow at residues 304–383 (NVSL…NNQQ), 465–495 (DHHQ…SPIV), 517–570 (DNLD…SSSS), 618–657 (NNND…NTSF), 670–823 (TIGR…QQQP), 1115–1150 (SNSI…NNST), 1633–1659 (RSKR…QILI), 1710–1844 (VNNN…SSTP), 2031–2127 (QQQQ…SISP), 2179–2208 (NQQQ…SIIE), 2246–2304 (QQGD…SSNS), and 2617–2656 (NNNN…QINK). The segment covering 332 to 355 (QQQQQQQQQQQQQQQQQQQQQQQQ) has biased composition (low complexity). Polar residues-rich tracts occupy residues 356–371 (TTGV…NSTL), 473–489 (SNSH…TPSG), and 542–557 (SHSS…TVST). 5 stretches are compositionally biased toward low complexity: residues 558 to 570 (GESN…SSSS), 618 to 637 (NNND…NNNN), 674 to 730 (NNNN…NLPN), 743 to 757 (QQQQ…QPQP), and 811 to 823 (PSSS…QQQP). Low complexity-rich tracts occupy residues 1639–1656 (QQQQ…PQPQ) and 1710–1746 (VNNN…NNNN). Coiled-coil stretches lie at residues 1741–1823 (NNNN…NNNN) and 2019–2061 (KRIS…QQEQ). Residues 1750-1798 (NKSENENENKNENKNENENENENKNENKNENENENKKENENQLEIKNEN) are compositionally biased toward basic and acidic residues. 4 stretches are compositionally biased toward low complexity: residues 1807-1833 (NNNN…IDNN), 2031-2061 (QQQQ…QQEQ), 2078-2107 (SPSS…SETN), and 2118-2127 (LSGSPISISP). Over residues 2193–2202 (IDEKDDRNTE) the composition is skewed to basic and acidic residues. 2 stretches are compositionally biased toward low complexity: residues 2252–2283 (NNNN…NNNN) and 2618–2647 (NNNN…GNIN). Residues 2275 to 2596 (NNNNTNNNNE…RFRDAMWLYF (322 aa)) form the PIPK domain.

Its subcellular location is the endosome membrane. It is found in the early endosome membrane. It localises to the cytoplasmic vesicle. The protein resides in the phagosome membrane. The protein localises to the late endosome membrane. It carries out the reaction a 1,2-diacyl-sn-glycero-3-phospho-(1D-myo-inositol-3-phosphate) + ATP = a 1,2-diacyl-sn-glycero-3-phospho-(1D-myo-inositol-3,5-bisphosphate) + ADP + H(+). The enzyme catalyses a 1,2-diacyl-sn-glycero-3-phospho-(1D-myo-inositol) + ATP = a 1,2-diacyl-sn-glycero-3-phospho-(1D-myo-inositol-5-phosphate) + ADP + H(+). It catalyses the reaction L-seryl-[protein] + ATP = O-phospho-L-seryl-[protein] + ADP + H(+). In terms of biological role, dual specificity kinase part of the PI(3,5)P2 regulatory complex which regulates both the synthesis and turnover of phosphatidylinositol 3,5-bisphosphate (PtdIns(3,5)P2). Catalyzes the phosphorylation of phosphatidylinositol 3-phosphate on the fifth hydroxyl of the myo-inositol ring, to form phosphatidylinositol 3,5-bisphosphate. The polypeptide is 1-phosphatidylinositol 3-phosphate 5-kinase (pip5k3) (Dictyostelium discoideum (Social amoeba)).